The sequence spans 389 residues: Methylthioribose kinase (389 aa).

ATP-binding positions include Asn-37, Lys-52, and 106 to 108 (EDL). A substrate-binding site is contributed by Asp-224. ATP is bound at residue 241 to 243 (DPE). Residue Arg-331 participates in substrate binding.

Belongs to the methylthioribose kinase family. Homodimer.

The enzyme catalyses 5-(methylsulfanyl)-D-ribose + ATP = 5-(methylsulfanyl)-alpha-D-ribose 1-phosphate + ADP + H(+). It functions in the pathway amino-acid biosynthesis; L-methionine biosynthesis via salvage pathway; S-methyl-5-thio-alpha-D-ribose 1-phosphate from S-methyl-5'-thioadenosine (hydrolase route): step 2/2. Functionally, catalyzes the phosphorylation of methylthioribose into methylthioribose-1-phosphate. The sequence is that of Methylthioribose kinase from Exiguobacterium sibiricum (strain DSM 17290 / CCUG 55495 / CIP 109462 / JCM 13490 / 255-15).